Consider the following 173-residue polypeptide: Alpha-crystallin A chain (173 aa).

Position 1 is an N-acetylmethionine (Met-1). Residues 1-63 (MDVTIQHPWF…RTVLDSGISE (63 aa)) form a required for complex formation with BFSP1 and BFSP2 region. Gln-6 is subject to Deamidated glutamine; partial. Ser-45 is subject to Phosphoserine. Gln-50 is modified (deamidated glutamine; partial). Positions 52-162 (LFRTVLDSGI…GHSERAIPVS (111 aa)) constitute a sHSP domain. N6-acetyllysine is present on Lys-70. At Gln-90 the chain carries Deamidated glutamine; partial. Position 99 is an N6-acetyllysine (Lys-99). The Zn(2+) site is built by His-100, Glu-102, and His-107. Position 122 is a phosphoserine (Ser-122). Asn-123 carries the post-translational modification Deamidated asparagine; partial. A disordered region spans residues 145-173 (KVQSGLDAGHSERAIPVSREEKPSSAPSS). Gln-147 is subject to Deamidated glutamine; partial. Over residues 153 to 167 (GHSERAIPVSREEKP) the composition is skewed to basic and acidic residues. His-154 contributes to the Zn(2+) binding site. A glycan (O-linked (GlcNAc) serine) is linked at Ser-162.

It belongs to the small heat shock protein (HSP20) family. In terms of assembly, heteromer composed of three CRYAA and one CRYAB subunits. Inter-subunit bridging via zinc ions enhances stability, which is crucial as there is no protein turn over in the lens. Can also form homodimers and homotetramers (dimers of dimers) which serve as the building blocks of homooligomers. Within homooligomers, the zinc-binding motif is created from residues of 3 different molecules. His-100 and Glu-102 from one molecule are ligands of the zinc ion, and His-107 and His-154 residues from additional molecules complete the site with tetrahedral coordination geometry. Part of a complex required for lens intermediate filament formation composed of BFSP1, BFSP2 and CRYAA. Post-translationally, acetylation at Lys-70 may increase chaperone activity. Undergoes age-dependent proteolytical cleavage at the C-terminus.

The protein localises to the cytoplasm. It is found in the nucleus. Contributes to the transparency and refractive index of the lens. Acts as a chaperone, preventing aggregation of various proteins under a wide range of stress conditions. Required for the correct formation of lens intermediate filaments as part of a complex composed of BFSP1, BFSP2 and CRYAA. The sequence is that of Alpha-crystallin A chain (CRYAA) from Ochotona princeps (Southern American pika).